Reading from the N-terminus, the 292-residue chain is Formamidopyrimidine-DNA glycosylase (292 aa).

The Schiff-base intermediate with DNA role is filled by proline 2. Glutamate 3 functions as the Proton donor in the catalytic mechanism. Catalysis depends on lysine 60, which acts as the Proton donor; for beta-elimination activity. Histidine 109, arginine 128, and lysine 173 together coordinate DNA. The segment at 258 to 292 (NVYRRTGKKCRQCKNLIERQKISGRSTHWCRKCQK) adopts an FPG-type zinc-finger fold. Arginine 282 acts as the Proton donor; for delta-elimination activity in catalysis.

It belongs to the FPG family. In terms of assembly, monomer. It depends on Zn(2+) as a cofactor.

The enzyme catalyses Hydrolysis of DNA containing ring-opened 7-methylguanine residues, releasing 2,6-diamino-4-hydroxy-5-(N-methyl)formamidopyrimidine.. The catalysed reaction is 2'-deoxyribonucleotide-(2'-deoxyribose 5'-phosphate)-2'-deoxyribonucleotide-DNA = a 3'-end 2'-deoxyribonucleotide-(2,3-dehydro-2,3-deoxyribose 5'-phosphate)-DNA + a 5'-end 5'-phospho-2'-deoxyribonucleoside-DNA + H(+). Functionally, involved in base excision repair of DNA damaged by oxidation or by mutagenic agents. Acts as a DNA glycosylase that recognizes and removes damaged bases. Has a preference for oxidized purines, such as 7,8-dihydro-8-oxoguanine (8-oxoG). Has AP (apurinic/apyrimidinic) lyase activity and introduces nicks in the DNA strand. Cleaves the DNA backbone by beta-delta elimination to generate a single-strand break at the site of the removed base with both 3'- and 5'-phosphates. In Prochlorococcus marinus subsp. pastoris (strain CCMP1986 / NIES-2087 / MED4), this protein is Formamidopyrimidine-DNA glycosylase.